A 145-amino-acid polypeptide reads, in one-letter code: MMHIDEILEYLPHRYPFLLVDRVTEVEKGKSIKGYKNVSFNEPFFTGHFPDNPIMPGVLIIEAMAQLSGILGFVTVERKPSDGVVQYLAGSSKARFKRPVLPGDRLDMESEFISGKRGIWKFDCRALVDGEVVCVAEILTAEREV.

The active site involves H48.

It belongs to the thioester dehydratase family. FabZ subfamily.

It localises to the cytoplasm. It catalyses the reaction a (3R)-hydroxyacyl-[ACP] = a (2E)-enoyl-[ACP] + H2O. In terms of biological role, involved in unsaturated fatty acids biosynthesis. Catalyzes the dehydration of short chain beta-hydroxyacyl-ACPs and long chain saturated and unsaturated beta-hydroxyacyl-ACPs. This chain is 3-hydroxyacyl-[acyl-carrier-protein] dehydratase FabZ, found in Marinobacter nauticus (strain ATCC 700491 / DSM 11845 / VT8) (Marinobacter aquaeolei).